The chain runs to 610 residues: UvrABC system protein C (610 aa).

Residues 16–94 form the GIY-YIG domain; sequence SQPGVYRMYD…IKLYQPRYNV (79 aa). In terms of domain architecture, UVR spans 204-239; it reads DQVLTQLIARMEKASQDLAFEEAARIRDQIQAVRRV.

The protein belongs to the UvrC family. Interacts with UvrB in an incision complex.

The protein resides in the cytoplasm. In terms of biological role, the UvrABC repair system catalyzes the recognition and processing of DNA lesions. UvrC both incises the 5' and 3' sides of the lesion. The N-terminal half is responsible for the 3' incision and the C-terminal half is responsible for the 5' incision. The sequence is that of UvrABC system protein C from Salmonella typhi.